A 330-amino-acid polypeptide reads, in one-letter code: Dipeptide transport ATP-binding protein DppD (330 aa).

The 249-residue stretch at 6-254 (VKELSVHFGD…PKHPYTQALL (249 aa)) folds into the ABC transporter domain. 40 to 47 (GESGSGKS) contacts ATP.

The protein belongs to the ABC transporter superfamily.

It localises to the cell inner membrane. The enzyme catalyses a dipeptide(out) + ATP + H2O = a dipeptide(in) + ADP + phosphate + H(+). Functionally, part of the ABC transporter DppBCDF involved in dipeptide transport. Responsible for energy coupling to the transport system. In Haemophilus influenzae (strain ATCC 51907 / DSM 11121 / KW20 / Rd), this protein is Dipeptide transport ATP-binding protein DppD (dppD).